We begin with the raw amino-acid sequence, 74 residues long: Defensin J1-2 (74 aa).

The signal sequence occupies residues 1–27 (MAGFSKVIATIFLMMMLVFATGMVAEA). Disulfide bonds link Cys30–Cys74, Cys41–Cys61, Cys47–Cys68, and Cys51–Cys70.

Belongs to the DEFL family. In terms of assembly, monomer. Expressed in flowers and in young fruits.

The protein resides in the secreted. Functionally, plant defense peptide with antifungal activity against F.oxysporum and B.cinerea. This chain is Defensin J1-2, found in Capsicum annuum (Capsicum pepper).